We begin with the raw amino-acid sequence, 340 residues long: Beta-ketoacyl-[acyl-carrier-protein] synthase III (340 aa).

Active-site residues include Cys122 and His260. Positions 261–265 (QANTR) are ACP-binding. Residue Asn291 is part of the active site.

This sequence belongs to the thiolase-like superfamily. FabH family. As to quaternary structure, homodimer.

It localises to the cytoplasm. It catalyses the reaction malonyl-[ACP] + acetyl-CoA + H(+) = 3-oxobutanoyl-[ACP] + CO2 + CoA. It participates in lipid metabolism; fatty acid biosynthesis. Its function is as follows. Catalyzes the condensation reaction of fatty acid synthesis by the addition to an acyl acceptor of two carbons from malonyl-ACP. Catalyzes the first condensation reaction which initiates fatty acid synthesis and may therefore play a role in governing the total rate of fatty acid production. Possesses both acetoacetyl-ACP synthase and acetyl transacylase activities. Its substrate specificity determines the biosynthesis of branched-chain and/or straight-chain of fatty acids. The polypeptide is Beta-ketoacyl-[acyl-carrier-protein] synthase III (Mycobacteroides abscessus (strain ATCC 19977 / DSM 44196 / CCUG 20993 / CIP 104536 / JCM 13569 / NCTC 13031 / TMC 1543 / L948) (Mycobacterium abscessus)).